A 419-amino-acid polypeptide reads, in one-letter code: Cytosine permease (419 aa).

The Cytoplasmic portion of the chain corresponds to 1-19 (MSQDNNFSQGPVPQSARKG). The chain crosses the membrane as a helical span at residues 20–39 (VLALTFVMLGLTFFSASMWT). Topologically, residues 40–51 (GGTLGTGLSYHD) are periplasmic. A helical membrane pass occupies residues 52 to 71 (FFLAVLIGNLLLGIYTSFLG). Residues 72-100 (YIGAKTGLTTHLLARFSFGVKGSWLPSLL) lie on the Cytoplasmic side of the membrane. Residues 101-120 (LGGTQVGWFGVGVAMFAIPV) form a helical membrane-spanning segment. The Periplasmic segment spans residues 121–127 (GKATGLD). Residues 128–147 (INLLIAVSGLLMTVTVFFGI) traverse the membrane as a helical segment. At 148-152 (SALTV) the chain is on the cytoplasmic side. A helical transmembrane segment spans residues 153–172 (LSLIAVPAIACLGGYSVWLA). Topologically, residues 173–192 (VNGMGGLDALKAVVPAQPLD) are periplasmic. The helical transmembrane segment at 193-212 (FNVALALVVGSFISAGTLTA) threads the bilayer. The Cytoplasmic portion of the chain corresponds to 213–221 (DFVRFGRNA). Residues 222-242 (KLAVLVAMVAFFLGNSLMFIF) form a helical membrane-spanning segment. At 243 to 257 (GAAGAAALGMADISD) the chain is on the periplasmic side. A helical transmembrane segment spans residues 258 to 277 (VMIAQGLLLPAIVVLGLNIW). At 278 to 300 (TTNDNALYASGLGFANITGMSSK) the chain is on the cytoplasmic side. Residues 301-320 (TLSVINGIIGTVCALWLYNN) form a helical membrane-spanning segment. Residue Phe321 is a topological domain, periplasmic. A helical membrane pass occupies residues 322–341 (VGWLTFLSAAIPPVGGVIIA). Topologically, residues 342-358 (DYLMNRRRYEHFATTRM) are cytoplasmic. A helical transmembrane segment spans residues 359 to 378 (MSVNWVAILAVALGIAAGHW). Residues 379-380 (LP) are Periplasmic-facing. Residues 381 to 400 (GIVPVNAVLGGALSYLILNP) form a helical membrane-spanning segment. Residues 401 to 419 (ILNRKTTAAMTHVEANSVE) lie on the Cytoplasmic side of the membrane.

The protein belongs to the purine-cytosine permease (2.A.39) family.

The protein localises to the cell inner membrane. Functionally, required for cytosine transport into the cell. The polypeptide is Cytosine permease (codB) (Escherichia coli O157:H7).